Consider the following 407-residue polypeptide: Imidazolonepropionase (407 aa).

His74 and His76 together coordinate Fe(3+). Zn(2+) is bound by residues His74 and His76. Residues Arg83, Tyr146, and His179 each coordinate 4-imidazolone-5-propanoate. Residue Tyr146 coordinates N-formimidoyl-L-glutamate. Residue His244 participates in Fe(3+) binding. His244 contributes to the Zn(2+) binding site. Gln247 lines the 4-imidazolone-5-propanoate pocket. Asp319 contributes to the Fe(3+) binding site. Asp319 provides a ligand contact to Zn(2+). N-formimidoyl-L-glutamate-binding residues include Asn321 and Gly323. Thr324 serves as a coordination point for 4-imidazolone-5-propanoate.

This sequence belongs to the metallo-dependent hydrolases superfamily. HutI family. It depends on Zn(2+) as a cofactor. Fe(3+) serves as cofactor.

It is found in the cytoplasm. The catalysed reaction is 4-imidazolone-5-propanoate + H2O = N-formimidoyl-L-glutamate. It participates in amino-acid degradation; L-histidine degradation into L-glutamate; N-formimidoyl-L-glutamate from L-histidine: step 3/3. Catalyzes the hydrolytic cleavage of the carbon-nitrogen bond in imidazolone-5-propanoate to yield N-formimidoyl-L-glutamate. It is the third step in the universal histidine degradation pathway. The chain is Imidazolonepropionase from Salmonella typhi.